A 1761-amino-acid chain; its full sequence is Nonribosomal peptide synthetase 6 (1761 aa).

An adenylation region spans residues 63 to 468 (ERAALHPEKI…GRQDQQVKLR (406 aa)). The region spanning 600–675 (EATTEMELKL…SMAEKAKPVS (76 aa)) is the Carrier 1 domain. An O-(pantetheine 4'-phosphoryl)serine modification is found at Ser-636. Positions 712 to 1135 (VEDVYPCTPL…AVLDPVEAQD (424 aa)) are condensation 1. Carrier domains are found at residues 1169-1242 (SPNE…SNER) and 1237-1313 (SASN…EEET). An O-(pantetheine 4'-phosphoryl)serine mark is found at Ser-1203 and Ser-1274. The condensation 2 stretch occupies residues 1354-1677 (IYPTRPLQQL…ESVQWFDTVV (324 aa)).

This sequence belongs to the NRP synthetase family.

Its pathway is siderophore biosynthesis. Its function is as follows. Nonribosomal peptide synthetase; part of the gene cluster that mediates the biosynthesis of hydroxamate-containing siderophores that play a critical role in virulence. Cochliobolus heterostrophus produces extracellular coprogen-type siderophores including coprogen, neocoprogen I and neocoprogen II, as well as the intracellular siderophore ferricrocin. The role of extracellular siderophores is to supply iron to the fungus during plant infection, and the intracellular ferricrocin is required for intracellular iron distribution and storage with a crucial role in ascus and ascospore development. SIDA2 catalyzes the conversion of L-ornithine to N(5)-hydroxyornithine, the first step in the biosynthesis of all hydroxamate-containing siderophores. The assembly of extracellular coprogen-type siderophores is then performed by the nonribosomal peptide synthetase (NRPS) NPS6 whereas the intracellular siderophore ferricrocin is assembled by NPS2. The protein is Nonribosomal peptide synthetase 6 of Cochliobolus heterostrophus (strain C4 / ATCC 48331 / race T) (Southern corn leaf blight fungus).